We begin with the raw amino-acid sequence, 323 residues long: Sphingolipid delta(4)-desaturase DES1 (323 aa).

The next 2 membrane-spanning stretches (helical) occupy residues 41 to 61 (HNLI…FYLV) and 68 to 88 (WLLF…TLAI). Positions 89–93 (HEISH) match the Histidine box-1 motif. Residues 104–124 (WNRCFGMFANLPLGLPYSVSF) traverse the membrane as a helical segment. A Histidine box-2 motif is present at residues 128 to 132 (HMDHH). The next 3 helical transmembrane spans lie at 152–172 (FFCT…FYTI), 185–205 (LEII…YTLG), and 210–230 (FYML…GHFI). The short motif at 259–263 (HNEHH) is the Histidine box-3 element.

This sequence belongs to the fatty acid desaturase type 1 family. DEGS subfamily. Interacts with RLBP1; the interaction increases synthesis of chromophore-precursors by DEGS1.

The protein localises to the endoplasmic reticulum membrane. It carries out the reaction an N-acylsphinganine + 2 Fe(II)-[cytochrome b5] + O2 + 2 H(+) = an N-acylsphing-4-enine + 2 Fe(III)-[cytochrome b5] + 2 H2O. The catalysed reaction is all-trans-retinol = 11-cis-retinol. The enzyme catalyses all-trans-retinol = 9-cis-retinol. It catalyses the reaction all-trans-retinol = 13-cis-retinol. It carries out the reaction 11-cis-retinol = 13-cis-retinol. The catalysed reaction is 11-cis-retinol = 9-cis-retinol. Its function is as follows. Has sphingolipid-delta-4-desaturase activity. Converts D-erythro-sphinganine to D-erythro-sphingosine (E-sphing-4-enine). Catalyzes the equilibrium isomerization of retinols. This chain is Sphingolipid delta(4)-desaturase DES1 (degs1), found in Xenopus tropicalis (Western clawed frog).